Reading from the N-terminus, the 266-residue chain is Apolipoprotein A-I (266 aa).

Positions 1-18 (MKAVVLTLAVLFLTGSQA) are cleaved as a signal peptide. A run of 2 repeats spans residues 67 to 88 (LKLL…EQIG) and 89 to 110 (PVTQ…QEMN). Residues 67–266 (LKLLDNWDSL…DEATKKLNSQ (200 aa)) are 10 X approximate tandem repeats. Methionine 109 bears the Methionine sulfoxide mark. The stretch at 111–121 (KDLEEVKKKVQ) is one 3; half-length repeat. Tandem repeats lie at residues 122-143 (PYLD…QKVA), 144-165 (PLGA…EKLS), 166-187 (PLGE…AQLA), 188-209 (PYGE…EGGG), and 210-231 (AALT…EKAK). The 9; half-length repeat unit spans residues 232-242 (PALEDLRQGLL). Repeat 10 spans residues 243 to 266 (PVLENFRVSLLAAVDEATKKLNSQ).

The protein belongs to the apolipoprotein A1/A4/E family. In terms of assembly, homodimer. Interacts with APOA1BP and CLU. Component of a sperm activating protein complex (SPAP), consisting of APOA1, an immunoglobulin heavy chain, an immunoglobulin light chain and albumin. Interacts with NDRG1. Interacts with SCGB3A2. Interacts with NAXE and YJEFN3. In terms of processing, glycosylated. Palmitoylated. Post-translationally, phosphorylation sites are present in the extracellular medium.

Its subcellular location is the secreted. In terms of biological role, participates in the reverse transport of cholesterol from tissues to the liver for excretion by promoting cholesterol efflux from tissues and by acting as a cofactor for the lecithin cholesterol acyltransferase (LCAT). As part of the SPAP complex, activates spermatozoa motility. The sequence is that of Apolipoprotein A-I (APOA1) from Leptonychotes weddellii (Weddell seal).